The following is a 786-amino-acid chain: UPF0313 protein SO_0311 (786 aa).

The region spanning 371 to 649 is the Radical SAM core domain; that stretch reads AYDMIKTSIN…KALLRYHDPA (279 aa). Cysteine 385, cysteine 389, and cysteine 392 together coordinate [4Fe-4S] cluster. Disordered regions lie at residues 669–688 and 698–786; these read NSPN…PKWM and LTRF…QQAK. 2 stretches are compositionally biased toward basic and acidic residues: residues 679–688 and 706–717; these read GRNERGPKWM and FDERKGKGDAKG. The span at 718–731 shows a compositional bias: low complexity; it reads KPSASKPKGPKSGA. Polar residues predominate over residues 732-741; it reads NAPQSQQPKT.

This sequence belongs to the UPF0313 family. [4Fe-4S] cluster serves as cofactor.

This chain is UPF0313 protein SO_0311, found in Shewanella oneidensis (strain ATCC 700550 / JCM 31522 / CIP 106686 / LMG 19005 / NCIMB 14063 / MR-1).